A 372-amino-acid chain; its full sequence is Putative glutamate--cysteine ligase 2 (372 aa).

It belongs to the glutamate--cysteine ligase type 2 family. YbdK subfamily. In terms of assembly, homodimer.

The enzyme catalyses L-cysteine + L-glutamate + ATP = gamma-L-glutamyl-L-cysteine + ADP + phosphate + H(+). Functionally, ATP-dependent carboxylate-amine ligase which exhibits weak glutamate--cysteine ligase activity. The protein is Putative glutamate--cysteine ligase 2 (ybdK) of Escherichia coli O127:H6 (strain E2348/69 / EPEC).